Consider the following 418-residue polypeptide: Glutamyl-tRNA reductase (418 aa).

Residues 49–52 (TCNR), Ser-109, 114–116 (EPQ), and Gln-120 contribute to the substrate site. Cys-50 functions as the Nucleophile in the catalytic mechanism. Residue 189-194 (GAGETI) participates in NADP(+) binding.

It belongs to the glutamyl-tRNA reductase family. As to quaternary structure, homodimer.

It carries out the reaction (S)-4-amino-5-oxopentanoate + tRNA(Glu) + NADP(+) = L-glutamyl-tRNA(Glu) + NADPH + H(+). It functions in the pathway porphyrin-containing compound metabolism; protoporphyrin-IX biosynthesis; 5-aminolevulinate from L-glutamyl-tRNA(Glu): step 1/2. Functionally, catalyzes the NADPH-dependent reduction of glutamyl-tRNA(Glu) to glutamate 1-semialdehyde (GSA). This Shigella flexneri protein is Glutamyl-tRNA reductase.